Consider the following 111-residue polypeptide: Ciprofloxacin tolerance protein (111 aa).

Over 1–5 the chain is Periplasmic; sequence MVTAN. A helical transmembrane segment spans residues 6–26; that stretch reads FAAIAGLSLIAVALVAVFFSP. At 27 to 30 the chain is on the cytoplasmic side; the sequence is YRRW. Residues 31-51 form a helical membrane-spanning segment; that stretch reads LGFMLAGMFFWGLLEVVRFGV. Residues 52-58 lie on the Periplasmic side of the membrane; it reads QVTFEMP. A helical membrane pass occupies residues 59-79; that stretch reads VTYSYLTALSLAMVMVTFVLL. Residues 80–111 are Cytoplasmic-facing; that stretch reads REDKQAQKALANRQYIEHTPVYEDDQQQCSSR.

Its subcellular location is the cell inner membrane. Functionally, may play a role in cellular filamentation, especially in response to ciprofloxacin. Increased expression confers tolerance to the antibiotic ciprofloxacin. The polypeptide is Ciprofloxacin tolerance protein (Acinetobacter baumannii).